Consider the following 312-residue polypeptide: Putative B3 domain-containing protein Os10g0537100 (312 aa).

Positions 35–153 (FEKVVTPSDV…RLFIDFRRRR (119 aa)) form a DNA-binding region, TF-B3. Disordered regions lie at residues 161–182 (FPPT…HPPL) and 286–312 (LLQL…DLGL). Residues 170-180 (HSHHHHQRHHP) show a composition bias toward basic residues. The segment covering 286–301 (LLQLPSPSSSTSSSTA) has biased composition (low complexity).

The protein resides in the nucleus. This chain is Putative B3 domain-containing protein Os10g0537100, found in Oryza sativa subsp. japonica (Rice).